Here is a 228-residue protein sequence, read N- to C-terminus: Orotidine 5'-phosphate decarboxylase (228 aa).

Residues aspartate 11, lysine 33, 60–69, threonine 117, arginine 178, glutamine 186, glycine 206, and arginine 207 each bind substrate; that span reads DLKLHDIPNT. The Proton donor role is filled by lysine 62.

It belongs to the OMP decarboxylase family. Type 1 subfamily. In terms of assembly, homodimer.

It carries out the reaction orotidine 5'-phosphate + H(+) = UMP + CO2. It functions in the pathway pyrimidine metabolism; UMP biosynthesis via de novo pathway; UMP from orotate: step 2/2. Catalyzes the decarboxylation of orotidine 5'-monophosphate (OMP) to uridine 5'-monophosphate (UMP). The chain is Orotidine 5'-phosphate decarboxylase from Ehrlichia canis (strain Jake).